The following is a 368-amino-acid chain: tRNA(Met) cytidine acetate ligase (368 aa).

Residues 7-20 (IAEF…HKYL), glycine 96, asparagine 152, and arginine 175 contribute to the ATP site.

The protein belongs to the TmcAL family.

It is found in the cytoplasm. The enzyme catalyses cytidine(34) in elongator tRNA(Met) + acetate + ATP = N(4)-acetylcytidine(34) in elongator tRNA(Met) + AMP + diphosphate. In terms of biological role, catalyzes the formation of N(4)-acetylcytidine (ac(4)C) at the wobble position of elongator tRNA(Met), using acetate and ATP as substrates. First activates an acetate ion to form acetyladenylate (Ac-AMP) and then transfers the acetyl group to tRNA to form ac(4)C34. The polypeptide is tRNA(Met) cytidine acetate ligase (Streptococcus pyogenes serotype M1).